Reading from the N-terminus, the 91-residue chain is Bacterial microcompartment shell vertex protein PduN (91 aa).

The BMV domain maps to 1 to 87 (MHLARVTGAV…IDLAVVGIVD (87 aa)).

This sequence belongs to the CcmL/EutN family. As to quaternary structure, homopentamer. Interacts with shell protein PduA.

The protein resides in the bacterial microcompartment. The protein operates within polyol metabolism; 1,2-propanediol degradation. Functionally, probably forms vertices in the shell of the bacterial microcompartment (BMC) dedicated to 1,2-propanediol (1,2-PD) degradation. Required for structural integrity of BMCs and to mitigate propionaldehyde toxicity. In terms of biological role, the 1,2-PD-specific bacterial microcompartment (BMC) concentrates low levels of 1,2-PD catabolic enzymes, concentrates volatile reaction intermediates thus enhancing pathway flux and keeps the level of toxic, mutagenic propionaldehyde low. The sequence is that of Bacterial microcompartment shell vertex protein PduN from Salmonella typhimurium (strain LT2 / SGSC1412 / ATCC 700720).